Consider the following 394-residue polypeptide: Phosphopentomutase (394 aa).

6 residues coordinate Mn(2+): aspartate 14, aspartate 287, histidine 292, aspartate 328, histidine 329, and histidine 340.

This sequence belongs to the phosphopentomutase family. Mn(2+) serves as cofactor.

The protein localises to the cytoplasm. It carries out the reaction 2-deoxy-alpha-D-ribose 1-phosphate = 2-deoxy-D-ribose 5-phosphate. It catalyses the reaction alpha-D-ribose 1-phosphate = D-ribose 5-phosphate. Its pathway is carbohydrate degradation; 2-deoxy-D-ribose 1-phosphate degradation; D-glyceraldehyde 3-phosphate and acetaldehyde from 2-deoxy-alpha-D-ribose 1-phosphate: step 1/2. Functionally, isomerase that catalyzes the conversion of deoxy-ribose 1-phosphate (dRib-1-P) and ribose 1-phosphate (Rib-1-P) to deoxy-ribose 5-phosphate (dRib-5-P) and ribose 5-phosphate (Rib-5-P), respectively. The polypeptide is Phosphopentomutase (Shouchella clausii (strain KSM-K16) (Alkalihalobacillus clausii)).